Consider the following 494-residue polypeptide: Aspartyl/glutamyl-tRNA(Asn/Gln) amidotransferase subunit B (494 aa).

The segment at 475–494 (TSGRADPKATNQMLAKKLKG) is disordered.

Belongs to the GatB/GatE family. GatB subfamily. As to quaternary structure, heterotrimer of A, B and C subunits.

The catalysed reaction is L-glutamyl-tRNA(Gln) + L-glutamine + ATP + H2O = L-glutaminyl-tRNA(Gln) + L-glutamate + ADP + phosphate + H(+). The enzyme catalyses L-aspartyl-tRNA(Asn) + L-glutamine + ATP + H2O = L-asparaginyl-tRNA(Asn) + L-glutamate + ADP + phosphate + 2 H(+). Its function is as follows. Allows the formation of correctly charged Asn-tRNA(Asn) or Gln-tRNA(Gln) through the transamidation of misacylated Asp-tRNA(Asn) or Glu-tRNA(Gln) in organisms which lack either or both of asparaginyl-tRNA or glutaminyl-tRNA synthetases. The reaction takes place in the presence of glutamine and ATP through an activated phospho-Asp-tRNA(Asn) or phospho-Glu-tRNA(Gln). In Acaryochloris marina (strain MBIC 11017), this protein is Aspartyl/glutamyl-tRNA(Asn/Gln) amidotransferase subunit B.